The chain runs to 880 residues: Guanine nucleotide-binding protein subunit beta 2 (880 aa).

Phosphoserine is present on Ser24. 3 Kelch repeats span residues 291 to 339, 377 to 425, and 501 to 552; these read NIYI…MVNN, HIFF…KIDI, and TVII…LTPS. The segment at 624-649 is disordered; that stretch reads FNSGSAAQESPKAGASASSASAASFD. The segment covering 638–647 has biased composition (low complexity); it reads ASASSASAAS. The stretch at 691-738 is one Kelch 4 repeat; that stretch reads TVVLHGGSNGLNVLDDMWLMDLECETWTPIETFAKADSSEDGDEKLDS.

In terms of assembly, g proteins are composed of 3 units, alpha, beta and gamma. GPB1 interacts with the alpha subunit GPA2.

It is found in the cytoplasm. The protein resides in the mitochondrion. Its function is as follows. Beta subunit of a guanine nucleotide-binding protein (G protein). G proteins are involved as modulators or transducers in various transmembrane signaling systems. The beta and gamma chains are required for the GTPase activity, for replacement of GDP by GTP, and for G protein-effector interaction. Involved in the determination of the cAMP level according to nutritional conditions, most probably as a regulator of cAMP phosphodiesterase. Required for the control of pseudohyphal and haploid invasive growth. In Saccharomyces cerevisiae (strain ATCC 204508 / S288c) (Baker's yeast), this protein is Guanine nucleotide-binding protein subunit beta 2 (GPB2).